A 143-amino-acid polypeptide reads, in one-letter code: Nucleoside diphosphate kinase (143 aa).

Residues Lys-11, Phe-59, Arg-87, Thr-93, Arg-104, and Asn-114 each coordinate ATP. Catalysis depends on His-117, which acts as the Pros-phosphohistidine intermediate.

This sequence belongs to the NDK family. As to quaternary structure, homotetramer. Mg(2+) is required as a cofactor.

The protein localises to the cytoplasm. The catalysed reaction is a 2'-deoxyribonucleoside 5'-diphosphate + ATP = a 2'-deoxyribonucleoside 5'-triphosphate + ADP. The enzyme catalyses a ribonucleoside 5'-diphosphate + ATP = a ribonucleoside 5'-triphosphate + ADP. In terms of biological role, major role in the synthesis of nucleoside triphosphates other than ATP. The ATP gamma phosphate is transferred to the NDP beta phosphate via a ping-pong mechanism, using a phosphorylated active-site intermediate. The protein is Nucleoside diphosphate kinase of Salmonella arizonae (strain ATCC BAA-731 / CDC346-86 / RSK2980).